The sequence spans 95 residues: MQIDDKMLEKLEKLSALKIPDQNREEFKSQLGKIVDFVDILNELDLDGIEATVSTIGGGTPFREDISKEGSVIDGILTHAPKKQNRYFEVPKIIE.

Belongs to the GatC family. Heterotrimer of A, B and C subunits.

It carries out the reaction L-glutamyl-tRNA(Gln) + L-glutamine + ATP + H2O = L-glutaminyl-tRNA(Gln) + L-glutamate + ADP + phosphate + H(+). It catalyses the reaction L-aspartyl-tRNA(Asn) + L-glutamine + ATP + H2O = L-asparaginyl-tRNA(Asn) + L-glutamate + ADP + phosphate + 2 H(+). In terms of biological role, allows the formation of correctly charged Asn-tRNA(Asn) or Gln-tRNA(Gln) through the transamidation of misacylated Asp-tRNA(Asn) or Glu-tRNA(Gln) in organisms which lack either or both of asparaginyl-tRNA or glutaminyl-tRNA synthetases. The reaction takes place in the presence of glutamine and ATP through an activated phospho-Asp-tRNA(Asn) or phospho-Glu-tRNA(Gln). The sequence is that of Aspartyl/glutamyl-tRNA(Asn/Gln) amidotransferase subunit C from Campylobacter fetus subsp. fetus (strain 82-40).